The sequence spans 243 residues: Zinc import ATP-binding protein ZnuC (243 aa).

Positions 8 to 225 (LNLSNVSYYI…SEFQKLFGHH (218 aa)) constitute an ABC transporter domain. 40–47 (GPNGAGKS) contacts ATP.

Belongs to the ABC transporter superfamily. Zinc importer (TC 3.A.1.15.5) family. As to quaternary structure, the complex is composed of two ATP-binding proteins (ZnuC), two transmembrane proteins (ZnuB) and a solute-binding protein (ZnuA).

The protein resides in the cell inner membrane. The catalysed reaction is Zn(2+)(out) + ATP(in) + H2O(in) = Zn(2+)(in) + ADP(in) + phosphate(in) + H(+)(in). In terms of biological role, part of the ABC transporter complex ZnuABC involved in zinc import. Responsible for energy coupling to the transport system. In Psychrobacter arcticus (strain DSM 17307 / VKM B-2377 / 273-4), this protein is Zinc import ATP-binding protein ZnuC.